Here is a 429-residue protein sequence, read N- to C-terminus: D-amino acid dehydrogenase (429 aa).

An FAD-binding site is contributed by 3–17; it reads VVVLGSGVVGVTSAY.

This sequence belongs to the DadA oxidoreductase family. It depends on FAD as a cofactor.

It carries out the reaction a D-alpha-amino acid + A + H2O = a 2-oxocarboxylate + AH2 + NH4(+). The protein operates within amino-acid degradation; D-alanine degradation; NH(3) and pyruvate from D-alanine: step 1/1. Functionally, oxidative deamination of D-amino acids. This chain is D-amino acid dehydrogenase, found in Paraburkholderia xenovorans (strain LB400).